The following is a 114-amino-acid chain: Protein ORF3 (114 aa).

Hydrophobic regions lie at residues 6–22 and 33–53; these read CALGLFCCCSSCFCLCC and AVVGGAAAVPAVVSGVTGLIL. The tract at residues 28–68 is interaction with host HPX; sequence VSRLAAVVGGAAAVPAVVSGVTGLILSPSQSPIFIQPTPLP. Positions 72–114 are homodimerization, and interaction with host AMBP/bikunin; that stretch reads PLRPGLDLAFANQPGHLAPLGEIRPSAPPLPPVADLPQPGLRR. The tract at residues 91 to 114 is disordered; that stretch reads LGEIRPSAPPLPPVADLPQPGLRR. Positions 95–104 are interaction with host SRC, HCK, FYN, PIK3R3 and GRB2; sequence RPSAPPLPPV. Positions 96–99 match the PTAP/PSAP motif motif; the sequence is PSAP.

The protein belongs to the hepevirus ORF3 protein family. In terms of assembly, forms homooligomers. Interacts with host SRC, HCK, FYN, PIK3R3 and GRB2 (via SH3 domain); binding does not activate the kinases. Interacts with host AMBP/bikunin and AMBP/alpha-1-microglobulin peptides. Interacts with host HPX/hemopexin. Interacts (when phosphorylated) with capsid protein ORF2. Interacts with host TSG101; this interaction plays a role in viral release from the host cell. Interacts with host SIRPA; this interaction down-regulates the phosphorylation of host IRF3. Post-translationally, palmitoylated in the N-terminus.

The protein resides in the host endoplasmic reticulum membrane. Its subcellular location is the host cytoplasm. It is found in the host cytoskeleton. It localises to the virion. The protein localises to the host cell membrane. Functionally, small multifunctional phosphoprotein involved in virion morphogenesis, egress and counteracting host innate immunity. Plays critical roles in the final steps of viral release by interacting with host TSG101, a member of the vacuolar protein-sorting pathway and using other cellular host proteins involved in vesicle formation pathway. Also acts as a viroporin and forms ion conductive pores allowing viral particle release. Impairs the generation of type I interferon by down-regulating host TLR3 and TLR7 as well as their downstream signaling pathways. Down-regulates the phosphorylation of host IRF3 via the interaction with host SIRP-alpha, thereby inhibiting IFN-I expression. Interacts with host microtubules. This is Protein ORF3 from Hepatitis E virus genotype 2 (isolate Human/Mexico) (HEV-2).